Here is a 204-residue protein sequence, read N- to C-terminus: Guanine-specific ADP-ribosyl transferase (204 aa).

An N-terminal signal peptide occupies residues 1 to 42 (MITTSLRRRTAAAVLSLSAVLATTAATAPGAAPAPSAAPAKA). Cys46 and Cys76 are oxidised to a cystine. Residues 81–85 (RSDSR) and Lys98 each bind NADH. GDP is bound by residues 111–114 (VLVN), 132–134 (WYK), Trp159, and Gln162. Positions 132–136 (WYKSG) match the PN (phosphate-nicotinamide) loop motif. An intrachain disulfide couples Cys180 to Cys194.

The protein belongs to the pierisin ADP-ribosyltransferase family. Monomer.

Its subcellular location is the secreted. The enzyme catalyses guanosine + NAD(+) = N(2)-(ADP-D-ribosyl)-guanosine + nicotinamide + H(+). The catalysed reaction is a 2'-deoxyguanosine in DNA + NAD(+) = an N(2)-(ADP-L-ribosyl)-2'-deoxyguanosine in DNA + nicotinamide + H(+). It carries out the reaction 2'-deoxyguanosine + NAD(+) = N(2)-(ADP-D-ribosyl)-2'-deoxyguanosine + nicotinamide + H(+). It catalyses the reaction GMP + NAD(+) = N(2)-(ADP-D-ribosyl)-GMP + nicotinamide + H(+). The enzyme catalyses GTP + NAD(+) = N(2)-(ADP-D-ribosyl)-GTP + nicotinamide + H(+). The catalysed reaction is dGMP + NAD(+) = N(2)-(ADP-D-ribosyl)-dGMP + nicotinamide + H(+). It carries out the reaction dGTP + NAD(+) = N(2)-(ADP-D-ribosyl)-dGTP + nicotinamide + H(+). It catalyses the reaction 3',5'-cyclic GMP + NAD(+) = N(2)-(ADP-D-ribosyl)-3',5'-cyclic GMP + nicotinamide + H(+). The enzyme catalyses guanine + NAD(+) = N(2)-(ADP-D-ribosyl)-guanine + nicotinamide + H(+). The catalysed reaction is GDP + NAD(+) = N(2)-(ADP-D-ribosyl)-GDP + nicotinamide + H(+). Its activity is regulated as follows. Inhibited by NADH. ADP-ribosylates the N2 amino group of guanosine, deoxyguanosine, GMP, dGMP, cGMP, GTP and dGTP; oligo-guanosine, oligo-deoxyguanosine and tRNA are ADP-ribosylated less efficiently, while dsDNA is a very poor substrate. Also acts on GDP. The protein is Guanine-specific ADP-ribosyl transferase of Streptomyces coelicolor (strain ATCC BAA-471 / A3(2) / M145).